The following is a 441-amino-acid chain: Deoxyguanosinetriphosphate triphosphohydrolase-like protein (441 aa).

The disordered stretch occupies residues 1-27 (MTSSVWQERRHGEDKQRRNDHRSPYQR). A compositionally biased stretch (basic and acidic residues) spans 7–27 (QERRHGEDKQRRNDHRSPYQR). The HD domain occupies 59–252 (RLTHSLEVSQ…MELADDIAYA (194 aa)).

Belongs to the dGTPase family. Type 2 subfamily.

This chain is Deoxyguanosinetriphosphate triphosphohydrolase-like protein, found in Shewanella oneidensis (strain ATCC 700550 / JCM 31522 / CIP 106686 / LMG 19005 / NCIMB 14063 / MR-1).